A 383-amino-acid chain; its full sequence is MAGSRRRIRLALLFGGRSTEHAISCISASGVLRALDRDVYDVVPVGIDTHGRWVVLPDDPTALAVTGDRLPAVVAAHGESVVLAADPTTPGLLPCRPRGGLDSVRNTLGSSDALGSSDIPGDIDVVFPLLHGPFGEDGTVQGLLEMAGLPYVGSGVFASAAAMDKQHMKALLRAAGLPVGSYAVLRAGDTLTGADQERLGLPVFVKPARGGSSIGISRVEAWADLDTAIKAARASDPKVLVESAIVGREIECGVLGILDGPGAEASVPAEITVTSSAGFYDFEAKYMSDATHFDVPANLSHAVREEVRGAAIAAFEALDCAGLARVDMFVTADDHVIINEVNTMPGFTPTSMFPRMWEASGVTYPQLVDRLVRLALRDGAGLR.

In terms of domain architecture, ATP-grasp spans Lys169–Arg373. Position 196 to 251 (Gln196 to Glu251) interacts with ATP. Residues Asp327, Glu340, and Asn342 each contribute to the Mg(2+) site.

The protein belongs to the D-alanine--D-alanine ligase family. Mg(2+) serves as cofactor. Requires Mn(2+) as cofactor.

It is found in the cytoplasm. The catalysed reaction is 2 D-alanine + ATP = D-alanyl-D-alanine + ADP + phosphate + H(+). The protein operates within cell wall biogenesis; peptidoglycan biosynthesis. Cell wall formation. This Frankia casuarinae (strain DSM 45818 / CECT 9043 / HFP020203 / CcI3) protein is D-alanine--D-alanine ligase.